The primary structure comprises 136 residues: D-ribose pyranase (136 aa).

The active-site Proton donor is the histidine 20. Residues aspartate 28, histidine 98, and 120-122 contribute to the substrate site; that span reads YAN.

The protein belongs to the RbsD / FucU family. RbsD subfamily. As to quaternary structure, homodecamer.

The protein localises to the cytoplasm. It carries out the reaction beta-D-ribopyranose = beta-D-ribofuranose. Its pathway is carbohydrate metabolism; D-ribose degradation; D-ribose 5-phosphate from beta-D-ribopyranose: step 1/2. Its function is as follows. Catalyzes the interconversion of beta-pyran and beta-furan forms of D-ribose. The protein is D-ribose pyranase of Geobacillus kaustophilus (strain HTA426).